The following is a 417-amino-acid chain: D-glycerate 2-kinase (417 aa).

This sequence belongs to the glycerate kinase type-1 family. Homodimer. The cofactor is Mg(2+).

The enzyme catalyses (R)-glycerate + ATP = (2R)-2-phosphoglycerate + ADP + H(+). Involved in the degradation of serine via 3-hydroxypyruvate. Catalyzes the ATP-dependent phosphorylation of D-glycerate to 2-phosphoglycerate. This is D-glycerate 2-kinase from Thermotoga maritima (strain ATCC 43589 / DSM 3109 / JCM 10099 / NBRC 100826 / MSB8).